Reading from the N-terminus, the 172-residue chain is uncharacterized protein (172 aa).

Positions 1-22 (MKLFQLLLLVLTISSFIISNNG) are cleaved as a signal peptide. The Extracellular segment spans residues 23 to 140 (LVESHQGRMH…FSYENSSNET (118 aa)). A disordered region spans residues 27–69 (HQGRMHRGSGERHHRAGGNQQQPQPPSEQQVESSYNSNDDGSS). Residues 29–42 (GRMHRGSGERHHRA) show a composition bias toward basic residues. Low complexity predominate over residues 53-69 (SEQQVESSYNSNDDGSS). Residues Asn135 and Asn138 are each glycosylated (N-linked (GlcNAc...) asparagine). A helical transmembrane segment spans residues 141 to 161 (IVIYINPVTLVFTLVLLLTFI). The Cytoplasmic segment spans residues 162–172 (VLTITQSLRKY).

The protein resides in the membrane. This is an uncharacterized protein from Dictyostelium discoideum (Social amoeba).